Reading from the N-terminus, the 180-residue chain is Hypoxanthine-guanine phosphoribosyltransferase (180 aa).

Residues lysine 40, 99-107 (EDIVDSGLT), lysine 131, and aspartate 159 each bind GMP. Aspartate 103 functions as the Proton acceptor in the catalytic mechanism. Aspartate 159 contributes to the Mg(2+) binding site.

Belongs to the purine/pyrimidine phosphoribosyltransferase family. It depends on Mg(2+) as a cofactor.

Its subcellular location is the cytoplasm. It catalyses the reaction IMP + diphosphate = hypoxanthine + 5-phospho-alpha-D-ribose 1-diphosphate. The enzyme catalyses GMP + diphosphate = guanine + 5-phospho-alpha-D-ribose 1-diphosphate. It functions in the pathway purine metabolism; IMP biosynthesis via salvage pathway; IMP from hypoxanthine: step 1/1. Functionally, converts guanine to guanosine monophosphate, and hypoxanthine to inosine monophosphate. Transfers the 5-phosphoribosyl group from 5-phosphoribosylpyrophosphate onto the purine. Plays a central role in the generation of purine nucleotides through the purine salvage pathway. The protein is Hypoxanthine-guanine phosphoribosyltransferase (hprT) of Dictyostelium discoideum (Social amoeba).